A 339-amino-acid chain; its full sequence is Ketol-acid reductoisomerase (NADP(+)) (339 aa).

Residues 1 to 182 enclose the KARI N-terminal Rossmann domain; it reads MRVYYDRDAD…GGGRAGIIET (182 aa). Residues 24-27, arginine 48, serine 51, serine 53, and 83-86 each bind NADP(+); these read YGSQ and DELQ. Residue histidine 108 is part of the active site. Residue glycine 134 participates in NADP(+) binding. The 146-residue stretch at 183–328 folds into the KARI C-terminal knotted domain; the sequence is TFKEECETDL…ERLRAMMPWI (146 aa). Mg(2+) is bound by residues aspartate 191, glutamate 195, glutamate 227, and glutamate 231. Substrate is bound at residue serine 252.

It belongs to the ketol-acid reductoisomerase family. The cofactor is Mg(2+).

The catalysed reaction is (2R)-2,3-dihydroxy-3-methylbutanoate + NADP(+) = (2S)-2-acetolactate + NADPH + H(+). It catalyses the reaction (2R,3R)-2,3-dihydroxy-3-methylpentanoate + NADP(+) = (S)-2-ethyl-2-hydroxy-3-oxobutanoate + NADPH + H(+). The protein operates within amino-acid biosynthesis; L-isoleucine biosynthesis; L-isoleucine from 2-oxobutanoate: step 2/4. It participates in amino-acid biosynthesis; L-valine biosynthesis; L-valine from pyruvate: step 2/4. Functionally, involved in the biosynthesis of branched-chain amino acids (BCAA). Catalyzes an alkyl-migration followed by a ketol-acid reduction of (S)-2-acetolactate (S2AL) to yield (R)-2,3-dihydroxy-isovalerate. In the isomerase reaction, S2AL is rearranged via a Mg-dependent methyl migration to produce 3-hydroxy-3-methyl-2-ketobutyrate (HMKB). In the reductase reaction, this 2-ketoacid undergoes a metal-dependent reduction by NADPH to yield (R)-2,3-dihydroxy-isovalerate. The protein is Ketol-acid reductoisomerase (NADP(+)) of Methylobacterium nodulans (strain LMG 21967 / CNCM I-2342 / ORS 2060).